The primary structure comprises 172 residues: Small ribosomal subunit protein uS5 (172 aa).

Positions 17-80 (LREKMISVNR…DEARRKMVKV (64 aa)) constitute an S5 DRBM domain.

It belongs to the universal ribosomal protein uS5 family. In terms of assembly, part of the 30S ribosomal subunit. Contacts proteins S4 and S8.

In terms of biological role, with S4 and S12 plays an important role in translational accuracy. Its function is as follows. Located at the back of the 30S subunit body where it stabilizes the conformation of the head with respect to the body. The polypeptide is Small ribosomal subunit protein uS5 (Cupriavidus taiwanensis (strain DSM 17343 / BCRC 17206 / CCUG 44338 / CIP 107171 / LMG 19424 / R1) (Ralstonia taiwanensis (strain LMG 19424))).